We begin with the raw amino-acid sequence, 529 residues long: uncharacterized protein (529 aa).

Positions 26 to 58 (CDSCRKQKTRCLAGSVEDENRACLRCRSLNMDC) form a DNA-binding region, zn(2)-C6 fungal-type.

The protein resides in the nucleus. This is an uncharacterized protein from Schizosaccharomyces pombe (strain 972 / ATCC 24843) (Fission yeast).